The chain runs to 429 residues: Histidinol dehydrogenase (429 aa).

NAD(+)-binding residues include Tyr-130, Gln-191, and Asn-214. The substrate site is built by Ser-237, Gln-259, and His-262. Residues Gln-259 and His-262 each coordinate Zn(2+). Catalysis depends on proton acceptor residues Glu-327 and His-328. Substrate contacts are provided by His-328, Asp-361, Glu-415, and His-420. Asp-361 lines the Zn(2+) pocket. Residue His-420 coordinates Zn(2+).

Belongs to the histidinol dehydrogenase family. Zn(2+) is required as a cofactor.

The catalysed reaction is L-histidinol + 2 NAD(+) + H2O = L-histidine + 2 NADH + 3 H(+). Its pathway is amino-acid biosynthesis; L-histidine biosynthesis; L-histidine from 5-phospho-alpha-D-ribose 1-diphosphate: step 9/9. Catalyzes the sequential NAD-dependent oxidations of L-histidinol to L-histidinaldehyde and then to L-histidine. This chain is Histidinol dehydrogenase, found in Neisseria meningitidis serogroup A / serotype 4A (strain DSM 15465 / Z2491).